Consider the following 754-residue polypeptide: MGLSDIPANYMQGSHPHLTLHPQQQHHQNQQHLQHLQQMQQLHNAMPTPAQQAAQVLAMESNELLMSTKDKLSSKKKMHLLKKIKKRFGLVRRSPSSCPGPNNLPPLQFHSVHGDNIRISRDGTLARRFESFCRAITFSARPVRINERICVKFAEISNNWNGGIRFGFTSNDPVTLEGTLPKYACPDLTNRPGFWAKALHEQYCEKDNILYYYVNGAGDVIYGINNEEKGVILTGIDTRSLLWTVIDIYGNCTGIEFLDSRIYMYQQQPAAIPMATVPAQQQQMPQPAANASSALNSHHPHQQSRRSLPGHTAAIEHDLERHVMPSLQSLHLAGNGGSVASVEQAAIAHDLANGLPPLRYNANGRLIPVPFHNTKGRNVRLSQDRFVASRTESDFCQGYVFTARPIRIGEKLIVQVLKTEQMYVGALALGLTSCNPAMLQPNDLPNDSDFLLDRPEYWVVSKDIAAAPQRGDEIAFFVAPNGEVSISKNNGPAVVVMHVDQSLQLWAFLDVYGSTQSLRMFRQQLPNMVAYPSQPQVNVNASSSSACNAASTSRMLPMTESMSSLNAGATAKLLHHPSQLSVAQSTSTLASAGGVNGSRMISMPSNGDILQIQPNGGGTVLVVNLPPASSSHDINGQLAARPTATVTSSGVLAGACSSGTLISTTSSQYIEQPIANSTNNAANKWKDSLSDQQSTDSSAECTICYENPIDSVLYMCGHMCMCYDCAIEQWRGVGGGQCPLCRAVIRDVIRTYTT.

One can recognise an NHR 1 domain in the interval 106-260 (PLQFHSVHGD…NCTGIEFLDS (155 aa)). The span at 280 to 297 (QQQQMPQPAANASSALNS) shows a compositional bias: low complexity. Residues 280–308 (QQQQMPQPAANASSALNSHHPHQQSRRSL) form a disordered region. Phosphoserine occurs at positions 338 and 341. The 156-residue stretch at 368–523 (PVPFHNTKGR…STQSLRMFRQ (156 aa)) folds into the NHR 2 domain. The segment at 701 to 742 (CTICYENPIDSVLYMCGHMCMCYDCAIEQWRGVGGGQCPLCR) adopts an RING-type zinc-finger fold.

It is found in the nucleus. In terms of biological role, involved in neurogenesis. Interacts with other neurogenic proteins in the specification of the neuroblast versus epidermoblast cell fate. This chain is Protein neuralized (neur), found in Drosophila melanogaster (Fruit fly).